A 251-amino-acid polypeptide reads, in one-letter code: Aspartate/glutamate leucyltransferase (251 aa).

The protein belongs to the R-transferase family. Bpt subfamily.

The protein localises to the cytoplasm. The catalysed reaction is N-terminal L-glutamyl-[protein] + L-leucyl-tRNA(Leu) = N-terminal L-leucyl-L-glutamyl-[protein] + tRNA(Leu) + H(+). It carries out the reaction N-terminal L-aspartyl-[protein] + L-leucyl-tRNA(Leu) = N-terminal L-leucyl-L-aspartyl-[protein] + tRNA(Leu) + H(+). Functionally, functions in the N-end rule pathway of protein degradation where it conjugates Leu from its aminoacyl-tRNA to the N-termini of proteins containing an N-terminal aspartate or glutamate. The polypeptide is Aspartate/glutamate leucyltransferase (Xanthomonas axonopodis pv. citri (strain 306)).